Consider the following 366-residue polypeptide: 3-dehydroquinate synthase (366 aa).

NAD(+) is bound by residues 74–79 (SGEAAK), 108–112 (GVVGD), 132–133 (TT), Lys144, Lys153, and 171–174 (FLRT). Residues Glu186, His249, and His266 each contribute to the Zn(2+) site.

This sequence belongs to the sugar phosphate cyclases superfamily. Dehydroquinate synthase family. It depends on Co(2+) as a cofactor. The cofactor is Zn(2+). NAD(+) serves as cofactor.

It localises to the cytoplasm. The catalysed reaction is 7-phospho-2-dehydro-3-deoxy-D-arabino-heptonate = 3-dehydroquinate + phosphate. It participates in metabolic intermediate biosynthesis; chorismate biosynthesis; chorismate from D-erythrose 4-phosphate and phosphoenolpyruvate: step 2/7. Its function is as follows. Catalyzes the conversion of 3-deoxy-D-arabino-heptulosonate 7-phosphate (DAHP) to dehydroquinate (DHQ). The protein is 3-dehydroquinate synthase of Geobacillus thermodenitrificans (strain NG80-2).